Here is a 397-residue protein sequence, read N- to C-terminus: 4-hydroxybenzoate polyprenyltransferase, mitochondrial (397 aa).

The transit peptide at 1–14 (MFAVRHLLKSRKHF) directs the protein to the mitochondrion. Helical transmembrane passes span 96 to 116 (IGTYLLFWPCAWSIALSADAG), 121 to 141 (LTMLGLFGTGALIMRGAGCTI), 169 to 189 (FDAIVFLSAQLSLGLLVLVQL), 190 to 210 (NWQSILLGASSLGLVITYPLM), 213 to 233 (VTYWPQLVLGMAFNWGALLGW), 242 to 262 (LAACLPLYLSGVCWTIVYDTI), 289 to 309 (VWLSGFTAAMLTGLSTAGWAC), 313 to 333 (LPYYAAVGVVGAHLVQQIYSL), and 345 to 365 (FLSNHQVGLILFLGIVLGTLL).

It belongs to the UbiA prenyltransferase family. Requires Mg(2+) as cofactor.

The protein resides in the mitochondrion inner membrane. It carries out the reaction an all-trans-polyprenyl diphosphate + 4-hydroxybenzoate = a 4-hydroxy-3-(all-trans-polyprenyl)benzoate + diphosphate. Its pathway is cofactor biosynthesis; ubiquinone biosynthesis. In terms of biological role, catalyzes the prenylation of para-hydroxybenzoate (PHB) with an all-trans polyprenyl group. Mediates the second step in the final reaction sequence of coenzyme Q (CoQ) biosynthesis, which is the condensation of the polyisoprenoid side chain with PHB, generating the first membrane-bound Q intermediate. The polypeptide is 4-hydroxybenzoate polyprenyltransferase, mitochondrial (Drosophila pseudoobscura pseudoobscura (Fruit fly)).